The following is a 1531-amino-acid chain: Myosin-17 (1531 aa).

The Myosin N-terminal SH3-like domain occupies 8 to 57 (IVGSHVWIEDPGAAWIDGEVVKINGEEVHAHTTNGKTVVANIANVFPKDT). Positions 62–732 (GGVDDMTKLS…QMAELDARRA (671 aa)) constitute a Myosin motor domain. ATP is bound by residues 156–163 (GESGAGKT) and 209–217 (NNNSSRFGK). Actin-binding regions lie at residues 495–529 (LIEK…YQTF), 531–554 (NYKR…AGEV), 589–613 (FPRL…KLQL), and 613–635 (LQSL…KPNN). 5 consecutive IQ domains span residues 758–787 (LRGA…QAAA), 783–812 (RQAA…STIT), 806–835 (IRHS…MKAA), 831–860 (QMKA…AALS), and 854–883 (LQKA…AARD). Residues 884 to 1056 (TGALREAKDK…VLRQQALAIS (173 aa)) are a coiled coil. A disordered region spans residues 1071–1090 (LPRTPENGNYLNGGTKTTPD). A compositionally biased stretch (polar residues) spans 1076 to 1090 (ENGNYLNGGTKTTPD). The Dilute domain occupies 1159–1470 (DRIIQTIATA…IANMRVMMTE (312 aa)). A Phosphoserine modification is found at serine 1517.

Belongs to the TRAFAC class myosin-kinesin ATPase superfamily. Myosin family. Plant myosin class XI subfamily. As to quaternary structure, homodimer. Interacts with MYOB1, MYOB2 and MYOB3. Interacts with PHOX1 and PHOX2. As to expression, expressed ubiquitously.

It localises to the cytoplasm. Myosin heavy chain that is required for the cell cycle-regulated transport of various organelles and proteins for their segregation. Functions by binding with its tail domain to receptor proteins on organelles and exerting force with its N-terminal motor domain against actin filaments, thereby transporting its cargo along polarized actin cables. Involved in the tip growth of root hair cells and in the elongation of trichome stalk and branches. Plays a major role in trafficking of Golgi stacks, mitochondria and peroxisomes during root hair development. Acts as the primary contributor to ER streaming with a major role in the movement of Golgi bodies. Required for development of pavement cells, trichomes, and stigmatic papillae. Together with XI-F, required for the regulation of organ bending, such as gravitropic root bending. The sequence is that of Myosin-17 from Arabidopsis thaliana (Mouse-ear cress).